The primary structure comprises 778 residues: GRIP and coiled-coil domain-containing protein 1 (778 aa).

Residues 13–61 are a coiled coil; sequence SKKDLLETIETQKKQLLQYQARLKDVVRAYKSLLKEKEALEASIKVLSV. Disordered stretches follow at residues 70 to 157, 186 to 208, and 617 to 638; these read SGVQ…MDKR, YLADKKKMKQDLEDANKKAEEER, and GRRSPVGGVGGGGLGDPADTAS. The span at 83–93 shows a compositional bias: basic and acidic residues; that stretch reads VDDRCSTHSED. 2 stretches are compositionally biased toward low complexity: residues 94-109 and 133-152; these read STGTATSLDTAASLTS and ASGSESGVSSSSGDGPSAGS. Residues 152-702 are a coiled coil; sequence SEMDKRVHQL…EEGERHREEV (551 aa). Residues 716–766 enclose the GRIP domain; it reads QSREGANLEYLKNIIYRFLTLPDSLGRQQTLTAILTILHFSPEEKQVLMRL.

The protein localises to the cytoplasm. It localises to the golgi apparatus membrane. In terms of biological role, probably involved in maintaining Golgi structure. This Mus musculus (Mouse) protein is GRIP and coiled-coil domain-containing protein 1 (Gcc1).